The sequence spans 615 residues: DNA mismatch repair protein MutL (615 aa).

The segment at 362–397 (HFAEPAVREPVAPRYSPAPASGSRPAASWPNAQPGY) is disordered. Positions 373–391 (APRYSPAPASGSRPAASWP) are enriched in low complexity.

Belongs to the DNA mismatch repair MutL/HexB family.

Functionally, this protein is involved in the repair of mismatches in DNA. It is required for dam-dependent methyl-directed DNA mismatch repair. May act as a 'molecular matchmaker', a protein that promotes the formation of a stable complex between two or more DNA-binding proteins in an ATP-dependent manner without itself being part of a final effector complex. The polypeptide is DNA mismatch repair protein MutL (Escherichia coli O45:K1 (strain S88 / ExPEC)).